The sequence spans 405 residues: L-carnitine CoA-transferase (405 aa).

CoA contacts are provided by K97 and R104. Residue D169 is the Nucleophile of the active site.

It belongs to the CoA-transferase III family. CaiB subfamily. Homodimer.

Its subcellular location is the cytoplasm. The enzyme catalyses crotonobetainyl-CoA + (R)-carnitine = crotonobetaine + (R)-carnitinyl-CoA. It carries out the reaction 4-(trimethylamino)butanoyl-CoA + (R)-carnitine = (R)-carnitinyl-CoA + 4-(trimethylamino)butanoate. It functions in the pathway amine and polyamine metabolism; carnitine metabolism. In terms of biological role, catalyzes the reversible transfer of the CoA moiety from gamma-butyrobetainyl-CoA to L-carnitine to generate L-carnitinyl-CoA and gamma-butyrobetaine. Is also able to catalyze the reversible transfer of the CoA moiety from gamma-butyrobetainyl-CoA or L-carnitinyl-CoA to crotonobetaine to generate crotonobetainyl-CoA. The polypeptide is L-carnitine CoA-transferase (Escherichia coli (strain K12 / MC4100 / BW2952)).